Here is a 67-residue protein sequence, read N- to C-terminus: Protein AaeX (67 aa).

The next 2 helical transmembrane spans lie at 3 to 23 and 43 to 63; these read LFPV…ELLL and FVWH…YLIS.

It belongs to the AaeX family.

The protein localises to the cell membrane. The sequence is that of Protein AaeX from Salmonella agona (strain SL483).